The primary structure comprises 78 residues: Acyl carrier protein (78 aa).

Residues 2–77 form the Carrier domain; the sequence is STIEERVKKI…AAIDYVKAHQ (76 aa). At serine 37 the chain carries O-(pantetheine 4'-phosphoryl)serine.

It belongs to the acyl carrier protein (ACP) family. 4'-phosphopantetheine is transferred from CoA to a specific serine of apo-ACP by AcpS. This modification is essential for activity because fatty acids are bound in thioester linkage to the sulfhydryl of the prosthetic group.

The protein resides in the cytoplasm. It participates in lipid metabolism; fatty acid biosynthesis. Its function is as follows. Carrier of the growing fatty acid chain in fatty acid biosynthesis. This is Acyl carrier protein from Pseudomonas putida (strain ATCC 700007 / DSM 6899 / JCM 31910 / BCRC 17059 / LMG 24140 / F1).